Consider the following 142-residue polypeptide: Large ribosomal subunit protein uL11 (142 aa).

The disordered stretch occupies residues 86 to 105 (LKSGSKEPGKQSAGQISRAK).

The protein belongs to the universal ribosomal protein uL11 family. Part of the ribosomal stalk of the 50S ribosomal subunit. Interacts with L10 and the large rRNA to form the base of the stalk. L10 forms an elongated spine to which L12 dimers bind in a sequential fashion forming a multimeric L10(L12)X complex. In terms of processing, one or more lysine residues are methylated.

Functionally, forms part of the ribosomal stalk which helps the ribosome interact with GTP-bound translation factors. In Chelativorans sp. (strain BNC1), this protein is Large ribosomal subunit protein uL11.